Reading from the N-terminus, the 175-residue chain is Ribosome maturation factor RimM (175 aa).

One can recognise a PRC barrel domain in the interval 96–175 (EEDFYWRDLI…LIQVNWEPDF (80 aa)).

Belongs to the RimM family. In terms of assembly, binds ribosomal protein uS19.

Its subcellular location is the cytoplasm. Its function is as follows. An accessory protein needed during the final step in the assembly of 30S ribosomal subunit, possibly for assembly of the head region. Essential for efficient processing of 16S rRNA. May be needed both before and after RbfA during the maturation of 16S rRNA. It has affinity for free ribosomal 30S subunits but not for 70S ribosomes. This Psychromonas ingrahamii (strain DSM 17664 / CCUG 51855 / 37) protein is Ribosome maturation factor RimM.